A 173-amino-acid polypeptide reads, in one-letter code: Translation initiation factor IF-3 (173 aa).

The protein belongs to the IF-3 family. As to quaternary structure, monomer.

It is found in the cytoplasm. Functionally, IF-3 binds to the 30S ribosomal subunit and shifts the equilibrium between 70S ribosomes and their 50S and 30S subunits in favor of the free subunits, thus enhancing the availability of 30S subunits on which protein synthesis initiation begins. The chain is Translation initiation factor IF-3 from Methylobacterium sp. (strain 4-46).